We begin with the raw amino-acid sequence, 472 residues long: MDYFPIFCQLQNKACLLVGGGEVAERKARLLLDAGAAVTVNACEFTEQFHDWAEQGLLSLVSGEFAPELLAEKWLVIAATDQVAVNALVYQSANQQRVFCNVVDDPKRTSFIMPSIIDRSPIMIAISSGGKAPVLARLLREKLEAMLPQHLGQLAQLAGNLRQRVKQHFAAMTDRRRFWEKLLTHDRLAQSLANEDQVQVEQHVEQLFNAPLSDRGEVVLVGAGPGDAGLLTLKGLQQIQQADVVVYDRLVSDEVMNLVRRDAERIFVGKESGRHTVPQDQINQILLQQAQQGKRVVRLKGGDPFIFGRGGEELETLADYNIPFSVVPGITAASGCSAYSGIPLTHRDHAQSVRLITGHAKKDSQLDWANLAAEKQTLVFYMGLSQAGEIQQQLIRHGMPAATPVALVENGTSRHQRVVSGELSQLALLSQQVSSPSLIIVGSVVSLREKLNWFSSAEHGKTGMKEQVERVG.

The tract at residues 1–204 (MDYFPIFCQL…EDQVQVEQHV (204 aa)) is precorrin-2 dehydrogenase /sirohydrochlorin ferrochelatase. NAD(+)-binding positions include 22-23 (EV) and 43-44 (CE). At S128 the chain carries Phosphoserine. Positions 216 to 472 (GEVVLVGAGP…GMKEQVERVG (257 aa)) are uroporphyrinogen-III C-methyltransferase. P225 contacts S-adenosyl-L-methionine. Residue D248 is the Proton acceptor of the active site. K270 acts as the Proton donor in catalysis. Residues 301–303 (GGD), I306, 331–332 (TA), M382, and G411 each bind S-adenosyl-L-methionine.

The protein in the N-terminal section; belongs to the precorrin-2 dehydrogenase / sirohydrochlorin ferrochelatase family. In the C-terminal section; belongs to the precorrin methyltransferase family.

It catalyses the reaction uroporphyrinogen III + 2 S-adenosyl-L-methionine = precorrin-2 + 2 S-adenosyl-L-homocysteine + H(+). It carries out the reaction precorrin-2 + NAD(+) = sirohydrochlorin + NADH + 2 H(+). The catalysed reaction is siroheme + 2 H(+) = sirohydrochlorin + Fe(2+). The protein operates within cofactor biosynthesis; adenosylcobalamin biosynthesis; precorrin-2 from uroporphyrinogen III: step 1/1. Its pathway is cofactor biosynthesis; adenosylcobalamin biosynthesis; sirohydrochlorin from precorrin-2: step 1/1. It participates in porphyrin-containing compound metabolism; siroheme biosynthesis; precorrin-2 from uroporphyrinogen III: step 1/1. It functions in the pathway porphyrin-containing compound metabolism; siroheme biosynthesis; siroheme from sirohydrochlorin: step 1/1. The protein operates within porphyrin-containing compound metabolism; siroheme biosynthesis; sirohydrochlorin from precorrin-2: step 1/1. Functionally, multifunctional enzyme that catalyzes the SAM-dependent methylations of uroporphyrinogen III at position C-2 and C-7 to form precorrin-2 via precorrin-1. Then it catalyzes the NAD-dependent ring dehydrogenation of precorrin-2 to yield sirohydrochlorin. Finally, it catalyzes the ferrochelation of sirohydrochlorin to yield siroheme. The protein is Siroheme synthase 2 of Yersinia enterocolitica serotype O:8 / biotype 1B (strain NCTC 13174 / 8081).